Here is a 444-residue protein sequence, read N- to C-terminus: Trigger factor (444 aa).

The 86-residue stretch at 166–251 (GDQVVIDFKG…VKAVKAPKAA (86 aa)) folds into the PPIase FKBP-type domain.

It belongs to the FKBP-type PPIase family. Tig subfamily.

The protein resides in the cytoplasm. The catalysed reaction is [protein]-peptidylproline (omega=180) = [protein]-peptidylproline (omega=0). Its function is as follows. Involved in protein export. Acts as a chaperone by maintaining the newly synthesized protein in an open conformation. Functions as a peptidyl-prolyl cis-trans isomerase. The protein is Trigger factor of Cereibacter sphaeroides (strain KD131 / KCTC 12085) (Rhodobacter sphaeroides).